Here is a 107-residue protein sequence, read N- to C-terminus: YcgL domain-containing protein Pcryo_0807 (107 aa).

A YcgL domain is found at 1–95; it reads MHCDIYKFLK…QDVMRRQAEL (95 aa).

The sequence is that of YcgL domain-containing protein Pcryo_0807 from Psychrobacter cryohalolentis (strain ATCC BAA-1226 / DSM 17306 / VKM B-2378 / K5).